A 512-amino-acid chain; its full sequence is Reduced folate transporter (512 aa).

M1 carries the N-acetylmethionine modification. Residues 1 to 29 (MVPTGQVAEKQACEEPRQDRELKSWRWLV) are Cytoplasmic-facing. Residues 30–50 (FYLCFFGFMAQLRPGESFITP) form a helical membrane-spanning segment. Folate contacts are provided by I48 and T49. The Extracellular portion of the chain corresponds to 51 to 62 (YLLERNFTKEQV). N56 carries N-linked (GlcNAc...) asparagine glycosylation. Residues 63–85 (TNEIIPMLPYSHLAVLVPIFLLT) traverse the membrane as a helical segment. Over 86-89 (DYLR) the chain is Cytoplasmic. A helical transmembrane segment spans residues 90-110 (YKPVLVLQCLSFVCVWLLLLL). At 111–114 (GTSV) the chain is on the extracellular side. The helical transmembrane segment at 115–137 (VHMQLMEVFYSITMAARIAYSSY) threads the bilayer. Residues E121 and R131 each contribute to the folate site. Topologically, residues 138–151 (IFSLVQPSRYQRMA) are cytoplasmic. The chain crosses the membrane as a helical span at residues 152 to 176 (SYSRAAVLLGVFISSVLGQVLVTLG). Position 162 (V162) interacts with folate. Topologically, residues 177–181 (GISTY) are extracellular. Residues 182–200 (MLNCISLGFILFSLSLSLF) form a helical membrane-spanning segment. The Cytoplasmic segment spans residues 201–266 (LKRPKRSLFF…ELVKNVRQPQ (66 aa)). The chain crosses the membrane as a helical span at residues 267–292 (LRLWCLWWVFNSAGYYLITYYVHVLW). The folate site is built by Y281, Y282, and Y286. Residues 293-300 (KITDSRLN) are Extracellular-facing. Residues 301 to 323 (YNGAVDAASTLLSAITAFTAGFV) traverse the membrane as a helical segment. Residues 324 to 329 (NIRWAL) are Cytoplasmic-facing. Residues 330–350 (WSKLVIASVIAIQAGLVFCMF) form a helical membrane-spanning segment. Topologically, residues 351–353 (QIP) are extracellular. A helical transmembrane segment spans residues 354 to 377 (DIWVCYVTFVLFRGAYQFLVPIAT). Positions 366 and 370 each coordinate folate. Over 378–391 (FQIASSLSKELCAL) the chain is Cytoplasmic. A helical membrane pass occupies residues 392–415 (VFGINTFLATALKTSITLVVSDKR). The segment at 400–412 (ATALKTSITLVVS) is required for substrate-binding. Residues 416 to 423 (GLGLQVHQ) lie on the Extracellular side of the membrane. A helical membrane pass occupies residues 424 to 448 (QFRIYFMYFLTLSIICLAWAGLDGL). Residues 449–512 (RYYRRGRHQP…RADLRVEAKA (64 aa)) are Cytoplasmic-facing. S466, S471, and S476 each carry phosphoserine. The tract at residues 479-512 (DGDLRRPQPSAPQLLPEDGSVEDGRADLRVEAKA) is disordered. Residues 500 to 512 (EDGRADLRVEAKA) show a composition bias toward basic and acidic residues.

It belongs to the reduced folate carrier (RFC) transporter (TC 2.A.48) family. As to expression, expressed in liver, heart, brain, spleen, lung and skeletal muscle.

The protein localises to the cell membrane. It is found in the apical cell membrane. Its subcellular location is the basolateral cell membrane. It carries out the reaction 5-amino-1-(5-phospho-beta-D-ribosyl)imidazole-4-carboxamide(in) + (6S)-5-methyl-5,6,7,8-tetrahydrofolate(out) = 5-amino-1-(5-phospho-beta-D-ribosyl)imidazole-4-carboxamide(out) + (6S)-5-methyl-5,6,7,8-tetrahydrofolate(in). Its function is as follows. Antiporter that mediates the import of reduced folates, driven by the export of organic anions. Also acts as an importer of immunoreactive cyclic dinucleotides, but with a lower transporter activity. Mechanistically, acts as a secondary active transporter, which exports intracellular organic anions down their concentration gradients to facilitate the uptake of its substrates. Has high affinity for N5-methyltetrahydrofolate, the predominant circulating form of folate. Also mediates the import of antifolate drug methotrexate. 5-amino-4-imidazolecarboxamide riboside (AICAR), when phosphorylated to AICAR monophosphate, can serve as an organic anion for antiporter activity. The polypeptide is Reduced folate transporter (Rattus norvegicus (Rat)).